The following is a 949-amino-acid chain: RNA polymerase-associated protein RapA (949 aa).

The Helicase ATP-binding domain occupies 164–332; it reads EVADRIAPRV…FARLRLLDPN (169 aa). Position 177–184 (177–184) interacts with ATP; that stretch reads DEVGLGKT. The short motif at 278-281 is the DEAH box element; it reads DEAH. In terms of domain architecture, Helicase C-terminal spans 474 to 628; that stretch reads RVEWLIDQLK…TCPTGNALQH (155 aa).

The protein belongs to the SNF2/RAD54 helicase family. RapA subfamily. Interacts with the RNAP. Has a higher affinity for the core RNAP than for the holoenzyme. Its ATPase activity is stimulated by binding to RNAP.

Functionally, transcription regulator that activates transcription by stimulating RNA polymerase (RNAP) recycling in case of stress conditions such as supercoiled DNA or high salt concentrations. Probably acts by releasing the RNAP, when it is trapped or immobilized on tightly supercoiled DNA. Does not activate transcription on linear DNA. Probably not involved in DNA repair. This is RNA polymerase-associated protein RapA from Pseudomonas fluorescens (strain ATCC BAA-477 / NRRL B-23932 / Pf-5).